Reading from the N-terminus, the 697-residue chain is Phosphatase and actin regulator 4-B (697 aa).

The stretch at 42-67 (EVLERKISMRKPREELVKRGLIVDVP) is one RPEL 1 repeat. Disordered stretches follow at residues 63–381 (IVDV…LTLA) and 450–569 (LKVP…SKDE). Basic and acidic residues predominate over residues 189-202 (HVPEKTSEKYRPKS). 2 stretches are compositionally biased toward pro residues: residues 317–326 (PSPPLPPKRA) and 370–380 (APNPPVPPLTL). Acidic residues-rich tracts occupy residues 454 to 469 (DDDD…DESL), 501 to 514 (QEED…DTDS), and 522 to 532 (EEDEDEEEEET). 2 RPEL repeats span residues 579–604 (TQLN…QKNE) and 616–641 (RRLT…RFNE).

Belongs to the phosphatase and actin regulator family. Binds ppp1ca and actin.

It is found in the cytoplasm. The protein resides in the cell projection. Its subcellular location is the lamellipodium. Its function is as follows. Regulator of protein phosphatase 1 (PP1) required for neural tube and optic fissure closure, and enteric neural crest cell (ENCCs) migration during development. Acts as an activator of PP1. During neural tube closure, localizes to the ventral neural tube and activates PP1, leading to down-regulate cell proliferation within cranial neural tissue and the neural retina. Also acts as a regulator of migration of enteric neural crest cells (ENCCs) by activating PP1, leading to repression of the integrin signaling through the rho/rock pathway. The polypeptide is Phosphatase and actin regulator 4-B (phactr4-b) (Xenopus laevis (African clawed frog)).